We begin with the raw amino-acid sequence, 120 residues long: Ribonuclease P protein component (120 aa).

The protein belongs to the RnpA family. In terms of assembly, consists of a catalytic RNA component (M1 or rnpB) and a protein subunit.

The catalysed reaction is Endonucleolytic cleavage of RNA, removing 5'-extranucleotides from tRNA precursor.. RNaseP catalyzes the removal of the 5'-leader sequence from pre-tRNA to produce the mature 5'-terminus. It can also cleave other RNA substrates such as 4.5S RNA. The protein component plays an auxiliary but essential role in vivo by binding to the 5'-leader sequence and broadening the substrate specificity of the ribozyme. The sequence is that of Ribonuclease P protein component from Microcystis aeruginosa (strain NIES-843 / IAM M-2473).